The chain runs to 306 residues: D-alanine--D-alanine ligase (306 aa).

Positions 102–300 (KHVAKAAGIP…FGEFLRWMVE (199 aa)) constitute an ATP-grasp domain. 128 to 183 (PMKPPYVVKPVREGSSFGVVIVKEDQSHPPQVITSSEWRYGDRVMVERYIAGRELT) is an ATP binding site. Aspartate 252, glutamate 267, and asparagine 269 together coordinate Mg(2+).

The protein belongs to the D-alanine--D-alanine ligase family. Mg(2+) serves as cofactor. Requires Mn(2+) as cofactor.

It localises to the cytoplasm. It carries out the reaction 2 D-alanine + ATP = D-alanyl-D-alanine + ADP + phosphate + H(+). It participates in cell wall biogenesis; peptidoglycan biosynthesis. In terms of biological role, cell wall formation. The protein is D-alanine--D-alanine ligase of Sinorhizobium fredii (strain NBRC 101917 / NGR234).